We begin with the raw amino-acid sequence, 403 residues long: Cytochrome P450 monooxygenase ustC (403 aa).

The signal sequence occupies residues 1-18 (MSPFIFAVTLTFAILALG). Asn52 and Asn92 each carry an N-linked (GlcNAc...) asparagine glycan. Cys318 contacts heme.

Belongs to the cytochrome P450 family. Heme serves as cofactor.

It participates in mycotoxin biosynthesis. Cytochrome P450 monooxygenase; part of the gene cluster that mediates the biosynthesis of the secondary metabolite ustiloxin B, an antimitotic tetrapeptide. First, ustA is processed by the subtilisin-like endoprotease Kex2 that is outside the ustiloxin B gene cluster, at the C-terminal side of Arg-Lys, after transfer to Golgi apparatus through the endoplasmic reticulum (ER). Cleavage by KEX2 generates 16 peptides YAIG-I to YAIG-XVI. To process the precursor peptide further, at least two peptidases are necessary to cleave the N-terminal and C-terminal sides of the Tyr-Ala-Ile-Gly core peptide which serves as backbone for the synthesis of ustiloxin B, through cyclization and modification of the tyrosine with a non-protein coding amino acid, norvaline. One of the two peptidases must be the serine peptidase ustP; and the other pepdidase is probably ustH. Macrocyclization of the core peptide derived from ustA requires the tyrosinase ustQ, as well as the homologous oxidases ustYa and ustYb, and leads to the production of the first cyclization product N-desmethylustiloxin F. For the formation of N-desmethylustiloxin F, three oxidation steps are required, hydroxylation at the benzylic position, hydroxylation at either the aromatic ring of Tyr or beta-position of Ile, and oxidative cyclization. UstQ may catalyze the oxidation of a phenol moiety, whereas the ustYa and ustYb are most likely responsible for the remaining two-step oxidations. N-desmethylustiloxin F is then methylated by ustM to yield ustiloxin F which in turn substrate of the cytochrome P450 monooxygenase ustC which catalyzes the formation of S-deoxyustiloxin H. The flavoprotein monooxygenases ustF1 and ustF2 then participate in the modification of the side chain of S-deoxyustiloxin H, leading to the synthesis of an oxime intermediate, via ustiloxin H. Finally, carboxylative dehydration performed by the cysteine desulfurase-like protein ustD yields ustiloxin B. This chain is Cytochrome P450 monooxygenase ustC, found in Aspergillus flavus (strain ATCC 200026 / FGSC A1120 / IAM 13836 / NRRL 3357 / JCM 12722 / SRRC 167).